Here is a 366-residue protein sequence, read N- to C-terminus: Stage V sporulation protein E (366 aa).

10 consecutive transmembrane segments (helical) span residues 10–30, 50–70, 77–97, 105–125, 144–164, 185–205, 227–247, 264–284, 306–326, and 337–357; these read LLLV…VYSA, LLFA…DYWT, LLMV…VGMV, IGVG…MIAF, FVPA…QPDL, IAHF…LVLS, GFQI…GMGL, FIFA…ILLL, FVAV…IGVV, and LPFL…VGVL.

Belongs to the SEDS family. SpoVE subfamily.

The protein resides in the cell membrane. Functionally, may play an essential role not only during sporulation, but also during vegetative growth. The chain is Stage V sporulation protein E (spoVE) from Bacillus subtilis (strain 168).